A 561-amino-acid polypeptide reads, in one-letter code: Arf-GAP domain and FG repeat-containing protein 1 (561 aa).

The Arf-GAP domain occupies 11–135 (EKHLKMLRDM…WYVPPEQAKV (125 aa)). A C4-type zinc finger spans residues 29–52 (CFDCDQRGPTYVNMTVGSFVCTSC). Ser-167 carries the phosphoserine modification. A disordered region spans residues 171–193 (LHLNKGTPTQSPVVGRSQGQQQE). The segment covering 176–191 (GTPTQSPVVGRSQGQQ) has biased composition (polar residues). Position 177 is a phosphothreonine (Thr-177). Ser-181 and Ser-362 each carry phosphoserine. A glycan (O-linked (GlcNAc) serine) is linked at Ser-367. Residues 409–451 (PVGASPQTQPASSGPAPFGATPSTNPFVAATGPSAASSTNPFQ) form a disordered region. The segment covering 442-451 (SAASSTNPFQ) has biased composition (polar residues).

As to quaternary structure, interacts with EPS15R and EPS15. Interacts with FCHO1. Post-translationally, O-glycosylated.

Its subcellular location is the nucleus. It is found in the cytoplasmic vesicle. In terms of biological role, required for vesicle docking or fusion during acrosome biogenesis. May play a role in RNA trafficking or localization. In Rattus norvegicus (Rat), this protein is Arf-GAP domain and FG repeat-containing protein 1 (Agfg1).